The following is a 325-amino-acid chain: Hydroxylase/desaturase poxK (325 aa).

Low complexity predominate over residues 1-12; the sequence is MTATATPVPTVA. The tract at residues 1–25 is disordered; it reads MTATATPVPTVASHAQDITLPPPPK.

Belongs to the asaB hydroxylase/desaturase family.

It participates in secondary metabolite biosynthesis. Its function is as follows. Hydroxylase/desaturase; part of the gene cluster that mediates the biosynthesis of oxaleimides, cytotoxic compounds containing an unusual disubstituted succinimide moiety. The first step of the pathway is provided by the HR-PKS poxF that serves in a new mode of collaborative biosynthesis with the PKS-NRPS poxE, by providing the olefin containing amino acid substrate via the synthesis of an ACP-bound dec-4-enoate. The cytochrome P450 monooxygenase poxM-catalyzed oxidation at the alpha-position creates the enzyme-bound 2-hydroxydec-4-enoyl-ACP thioester, which may be prone to spontaneous hydrolysis to yield 2-hydroxydec-4-enoic acid due to increased electrophilicity of the carbonyl. 2-hydroxydec-4-enoic acid can then be further oxidized by poxM to yield the alpha-ketoacid 2-oxodec-4-enoicacid, which is reductively aminated by the aminotransferase poxL to yield (S,E)-2-aminodec-4-enoic acid. The Hybrid PKS-NRPS synthetase poxE then performs condensation between the octaketide product of its PKS modules and the amino group of (S,E)-2-aminodec-4-enoic acid which is activated and incorporated by the adenylation domain. The resulting aminoacyl product can be cyclized by the Diels-Alderase PoxQ and reductively released by the reductive (R) domain of poxE to yield an aldehyde intermediate. The released aldehyde is then substrate for a Knoevenagel condensation by the hydrolyase poxO followed by an oxidation at the 5-position of the pyrrolidone ring. The presence of the olefin from the amino acid building block allows for migration of the substituted allyl group to occur. This allylic transposition reaction takes place in a conjugate addition, semipinacol-like fashion to yield a succinimide intermediate. Iterative two-electron oxidations of the C7 methyl of the succinimide intermediate to the carboxylic acid can be catalyzed by one of two remaining cytochrome P450 monooxygenasess poxC or poxD to yield oxaleimide A. Subsequent oxidation yields the maleimide scaffold oxaleimide I. Both oxaleimide A and oxaleimide I can undergo oxidative modifications in the decalin ring to yield the series of products oxaleimides B to H. This chain is Hydroxylase/desaturase poxK, found in Penicillium oxalicum (strain 114-2 / CGMCC 5302) (Penicillium decumbens).